A 434-amino-acid polypeptide reads, in one-letter code: Serine hydroxymethyltransferase (434 aa).

(6S)-5,6,7,8-tetrahydrofolate contacts are provided by residues Leu-133 and 137 to 139; that span reads GHL. Position 242 is an N6-(pyridoxal phosphate)lysine (Lys-242).

Belongs to the SHMT family. As to quaternary structure, homodimer. Requires pyridoxal 5'-phosphate as cofactor.

Its subcellular location is the cytoplasm. The catalysed reaction is (6R)-5,10-methylene-5,6,7,8-tetrahydrofolate + glycine + H2O = (6S)-5,6,7,8-tetrahydrofolate + L-serine. It participates in one-carbon metabolism; tetrahydrofolate interconversion. The protein operates within amino-acid biosynthesis; glycine biosynthesis; glycine from L-serine: step 1/1. Its function is as follows. Catalyzes the reversible interconversion of serine and glycine with tetrahydrofolate (THF) serving as the one-carbon carrier. This reaction serves as the major source of one-carbon groups required for the biosynthesis of purines, thymidylate, methionine, and other important biomolecules. Also exhibits THF-independent aldolase activity toward beta-hydroxyamino acids, producing glycine and aldehydes, via a retro-aldol mechanism. This is Serine hydroxymethyltransferase from Bradyrhizobium sp. (strain BTAi1 / ATCC BAA-1182).